Here is a 322-residue protein sequence, read N- to C-terminus: Interferon regulatory factor 1 (322 aa).

A DNA-binding region (IRF tryptophan pentad repeat) is located at residues 5 to 113 (RMRMRPWLEM…SAVRVYRMLP (109 aa)). Lys78 bears the N6-acetyllysine mark. The interval 92–164 (EEVKDQSRNK…STLPDDHSNY (73 aa)) is disordered. A compositionally biased stretch (polar residues) spans 146–157 (DTFSDGLSSSTL). Residues Lys276 and Lys296 each participate in a glycyl lysine isopeptide (Lys-Gly) (interchain with G-Cter in SUMO) cross-link.

This sequence belongs to the IRF family. In terms of assembly, monomer. Homodimer. Interacts with EP300. Interacts with MYD88. Interacts with PIAS3. Interacts with SPOP. Phosphorylated by CK2 and this positively regulates its activity. In terms of processing, sumoylation represses the transcriptional activity and displays enhanced resistance to protein degradation. Sumoylated by UBE2I/UBC9 and SUMO1. Inactivates the tumor suppressor activity. Elevated levels in tumor cells. Major site is Lys-276. Sumoylation is enhanced by PIAS3. Desumoylated by SENP1 in tumor cells and appears to compete with ubiquitination on C-terminal sites. Post-translationally, ubiquitinated in a SPOP-depedent manner. Appears to compete with sumoylation on C-terminal sites.

It localises to the nucleus. Its subcellular location is the cytoplasm. Its activity is regulated as follows. Activated by MYD88. Its function is as follows. Transcriptional regulator which displays a remarkable functional diversity in the regulation of cellular responses. Regulates transcription of IFN and IFN-inducible genes, host response to viral and bacterial infections, regulation of many genes expressed during hematopoiesis, inflammation, immune responses and cell proliferation and differentiation, regulation of the cell cycle and induction of growth arrest and programmed cell death following DNA damage. Stimulates both innate and acquired immune responses through the activation of specific target genes and can act as a transcriptional activator and repressor regulating target genes by binding to an interferon-stimulated response element (ISRE) in their promoters. Has an essentail role in IFNG-dependent immunity to mycobacteria. Binds to a consensus sequence in gene promoters. Its target genes for transcriptional activation activity include: genes involved in anti-viral response, such as IFN-alpha/beta, RIGI, TNFSF10/TRAIL, ZBP1, OAS1/2, PIAS1/GBP, EIF2AK2/PKR and RSAD2/viperin; antibacterial response, such as GBP2, GBP5 and NOS2/INOS; anti-proliferative response, such as p53/TP53, LOX and CDKN1A; apoptosis, such as BBC3/PUMA, CASP1, CASP7 and CASP8; immune response, such as IL7, IL12A/B and IL15, PTGS2/COX2 and CYBB; DNA damage responses and DNA repair, such as POLQ/POLH; MHC class I expression, such as TAP1, PSMB9/LMP2, PSME1/PA28A, PSME2/PA28B and B2M and MHC class II expression, such as CIITA; metabolic enzymes, such as ACOD1/IRG1. Represses genes involved in anti-proliferative response, such as BIRC5/survivin, CCNB1, CCNE1, CDK1, CDK2 and CDK4 and in immune response, such as FOXP3, IL4, ANXA2 and TLR4. Stimulates p53/TP53-dependent transcription through enhanced recruitment of EP300 leading to increased acetylation of p53/TP53. Plays an important role in immune response directly affecting NK maturation and activity, macrophage production of IL12, Th1 development and maturation of CD8+ T-cells. Also implicated in the differentiation and maturation of dendritic cells and in the suppression of regulatory T (Treg) cells development. Acts as a tumor suppressor and plays a role not only in antagonism of tumor cell growth but also in stimulating an immune response against tumor cells. The chain is Interferon regulatory factor 1 (IRF1) from Bos taurus (Bovine).